The chain runs to 137 residues: MPPKSRGTGPKKTQKARRRDKKNVPHGAAHIKSTFNNTIVSITDPAGNVISWASSGHVGFKGSRKSTPFAAQLAAENAARKAQEHGVKKVDVFVKGPGSGRETAIRSLQAAGLEVGTISDVTPQPHNGCRPPKRRRV.

2 disordered regions span residues 1-31 and 117-137; these read MPPK…AAHI and TISD…RRRV. Residues 12 to 21 show a composition bias toward basic residues; the sequence is KTQKARRRDK.

It belongs to the universal ribosomal protein uS11 family. In terms of assembly, part of the 30S ribosomal subunit. Interacts with proteins S7 and S18. Binds to IF-3.

Located on the platform of the 30S subunit, it bridges several disparate RNA helices of the 16S rRNA. Forms part of the Shine-Dalgarno cleft in the 70S ribosome. This Rhodococcus jostii (strain RHA1) protein is Small ribosomal subunit protein uS11.